Here is a 912-residue protein sequence, read N- to C-terminus: Protein translocase subunit SecA (912 aa).

ATP contacts are provided by residues Q87, 105–109 (GEGKT), and D509. Positions 847 to 859 (RERAVSQPVHEDA) are enriched in basic and acidic residues. The tract at residues 847–912 (RERAVSQPVH…KYKHCHGKLN (66 aa)) is disordered. The span at 867-878 (AESEEASGESAD) shows a compositional bias: acidic residues. The segment covering 881 to 892 (QPVRRDGPKVGR) has biased composition (basic and acidic residues). Zn(2+) contacts are provided by C896, C898, C907, and H908. Residues 902–912 (KKYKHCHGKLN) are compositionally biased toward basic residues.

Belongs to the SecA family. As to quaternary structure, monomer and homodimer. Part of the essential Sec protein translocation apparatus which comprises SecA, SecYEG and auxiliary proteins SecDF-YajC and YidC. Zn(2+) serves as cofactor.

The protein resides in the cell inner membrane. Its subcellular location is the cytoplasm. The catalysed reaction is ATP + H2O + cellular proteinSide 1 = ADP + phosphate + cellular proteinSide 2.. In terms of biological role, part of the Sec protein translocase complex. Interacts with the SecYEG preprotein conducting channel. Has a central role in coupling the hydrolysis of ATP to the transfer of proteins into and across the cell membrane, serving both as a receptor for the preprotein-SecB complex and as an ATP-driven molecular motor driving the stepwise translocation of polypeptide chains across the membrane. This chain is Protein translocase subunit SecA, found in Chromohalobacter salexigens (strain ATCC BAA-138 / DSM 3043 / CIP 106854 / NCIMB 13768 / 1H11).